The primary structure comprises 1296 residues: Probable serine/threonine protein kinase IREH1 (1296 aa).

3 disordered regions span residues 1–274 (MVFK…SESP), 457–480 (SGAGRSYSAAKVPSTKKAYSQEQH), and 524–553 (SPALKTVKEAPASEEQNDSKVEPPNIVGSR). Residues 10 to 32 (SSKKSGSSSPDSSNSPRSVGSNS) are compositionally biased toward low complexity. A Phosphoserine modification is found at Ser32. 3 stretches are compositionally biased toward basic and acidic residues: residues 68–77 (DGLKKKDGSS), 101–112 (EVKKPPPPEVKE), and 178–208 (RKKEAGSSKLGLEENMDRTRPSDNKSDRDSL). Over residues 214–249 (PPRSLSPTLPPSGSRLQNVASSSGTGRSEMSSGRSG) the composition is skewed to low complexity. Residues 602-621 (CRICEEEVPTTHVEDHSRVC) form a C2H2-type; atypical zinc finger. The interval 724-750 (FGPKSDQGMTTSSASSMTPRSPIPTPR) is disordered. Positions 730–740 (QGMTTSSASSM) are enriched in polar residues. The Protein kinase domain maps to 882–1171 (FEIIKPISRG…AAEVKQHIFF (290 aa)). ATP contacts are provided by residues 888–896 (ISRGAFGRV) and Lys911. Catalysis depends on Asp1005, which acts as the Proton acceptor. Ser1070 carries the phosphoserine modification. Positions 1172-1277 (KDINWDTLAR…KNLSQLASIN (106 aa)) constitute an AGC-kinase C-terminal domain. Positions 1214 to 1245 (PSGEVPDYSDADSMTNSSGCSSNHHEEGEAEE) are disordered. The segment covering 1225–1235 (DSMTNSSGCSS) has biased composition (polar residues). Over residues 1236–1245 (NHHEEGEAEE) the composition is skewed to basic and acidic residues.

Belongs to the protein kinase superfamily. AGC Ser/Thr protein kinase family.

It carries out the reaction L-seryl-[protein] + ATP = O-phospho-L-seryl-[protein] + ADP + H(+). The catalysed reaction is L-threonyl-[protein] + ATP = O-phospho-L-threonyl-[protein] + ADP + H(+). Its function is as follows. May be involved in root hair elongation. The sequence is that of Probable serine/threonine protein kinase IREH1 from Arabidopsis thaliana (Mouse-ear cress).